We begin with the raw amino-acid sequence, 1147 residues long: Probable phospholipid-transporting ATPase IIB (1147 aa).

At 1 to 146 (MADQIPLYPV…NQKYNVFTFI (146 aa)) the chain is on the cytoplasmic side. Residues 147–168 (PGVLYEQFKFFLNLYFLVISCS) traverse the membrane as a helical segment. Residues 169 to 173 (QFVPA) lie on the Extracellular side of the membrane. A helical membrane pass occupies residues 174–196 (LKIGYLYTYWAPLGFVLAVTMTR). The Cytoplasmic portion of the chain corresponds to 197 to 380 (EAIDEFRRFQ…GLLDLELNRL (184 aa)). Residues 381 to 401 (TKALFLALVALSIVMVTLQGF) form a helical membrane-spanning segment. Over 402-409 (VGPWYRNL) the chain is Extracellular. Residues 410–431 (FRFLLLFSYIIPISLRVNLDMG) form a helical membrane-spanning segment. The Cytoplasmic segment spans residues 432-930 (KAVYGWMMMK…GRNSYKRSAA (499 aa)). The 4-aspartylphosphate intermediate role is filled by D468. ATP is bound by residues D468, K469, and T470. A Mg(2+)-binding site is contributed by D468. T470 is a Mg(2+) binding site. A disordered region spans residues 503-535 (RDSYSQMQSQAGGNNTGSTPLRKAQSSAPKVRK). Positions 505-530 (SYSQMQSQAGGNNTGSTPLRKAQSSA) are enriched in polar residues. ATP contacts are provided by E591, F633, K638, K657, R686, T687, T766, G767, D768, R848, and K854. D874 is a Mg(2+) binding site. Residues N877 and D878 each contribute to the ATP site. Mg(2+) is bound at residue D878. A helical membrane pass occupies residues 931–951 (LGQFVMHRGLIISTMQAVFSS). At 952-963 (VFYFASVPLYQG) the chain is on the extracellular side. A helical transmembrane segment spans residues 964–982 (FLMVGYATIYTMFPVFSLV). The Cytoplasmic segment spans residues 983-1012 (LDQDVKPEMAMLYPELYKDLTKGRSLSFKT). Residues 1013-1031 (FLIWVLISIYQGGILMYGA) traverse the membrane as a helical segment. The Extracellular segment spans residues 1032–1038 (LVLFESE). A helical transmembrane segment spans residues 1039–1061 (FVHVVAISFTALILTELLMVALT). Topologically, residues 1062 to 1067 (VRTWHW) are cytoplasmic. The helical transmembrane segment at 1068-1088 (LMVVAEFLSLGCYVSSLAFLN) threads the bilayer. The Extracellular segment spans residues 1089-1105 (EYFGIGRVSFGAFLDVA). A helical transmembrane segment spans residues 1106–1130 (FITTVTFLWKVSAITVVSCLPLYVL). The Cytoplasmic portion of the chain corresponds to 1131–1147 (KYLRRKLSPPSYCKLAS).

It belongs to the cation transport ATPase (P-type) (TC 3.A.3) family. Type IV subfamily. The cofactor is Mg(2+).

The protein resides in the golgi apparatus. It localises to the trans-Golgi network membrane. The enzyme catalyses ATP + H2O + phospholipidSide 1 = ADP + phosphate + phospholipidSide 2.. The polypeptide is Probable phospholipid-transporting ATPase IIB (ATP9B) (Homo sapiens (Human)).